Here is a 226-residue protein sequence, read N- to C-terminus: NifU-like protein 1, chloroplastic (226 aa).

Residues 1–76 (MQTTTVPMAA…PVTAVQLPLT (76 aa)) constitute a chloroplast transit peptide.

This sequence belongs to the NifU family. In terms of assembly, homodimer; disulfide-linked.

It localises to the plastid. The protein localises to the chloroplast stroma. Molecular scaffold for [Fe-S] cluster assembly of chloroplastic iron-sulfur proteins. This chain is NifU-like protein 1, chloroplastic (NIFU1), found in Oryza sativa subsp. japonica (Rice).